The primary structure comprises 405 residues: Phosphopentomutase (405 aa).

The Mn(2+) site is built by Asp10, Asp305, His310, Asp346, His347, and His358.

This sequence belongs to the phosphopentomutase family. Mn(2+) serves as cofactor.

Its subcellular location is the cytoplasm. It carries out the reaction 2-deoxy-alpha-D-ribose 1-phosphate = 2-deoxy-D-ribose 5-phosphate. The enzyme catalyses alpha-D-ribose 1-phosphate = D-ribose 5-phosphate. Its pathway is carbohydrate degradation; 2-deoxy-D-ribose 1-phosphate degradation; D-glyceraldehyde 3-phosphate and acetaldehyde from 2-deoxy-alpha-D-ribose 1-phosphate: step 1/2. In terms of biological role, isomerase that catalyzes the conversion of deoxy-ribose 1-phosphate (dRib-1-P) and ribose 1-phosphate (Rib-1-P) to deoxy-ribose 5-phosphate (dRib-5-P) and ribose 5-phosphate (Rib-5-P), respectively. This chain is Phosphopentomutase, found in Methylorubrum extorquens (strain CM4 / NCIMB 13688) (Methylobacterium extorquens).